Consider the following 259-residue polypeptide: Type III pantothenate kinase (259 aa).

Position 6–13 (6–13 (DVGNTNIV)) interacts with ATP. Residues Tyr-100 and 107-110 (GADR) contribute to the substrate site. Asp-109 (proton acceptor) is an active-site residue. Residue Asp-129 coordinates K(+). An ATP-binding site is contributed by Thr-132. Thr-184 is a substrate binding site.

It belongs to the type III pantothenate kinase family. In terms of assembly, homodimer. It depends on NH4(+) as a cofactor. K(+) serves as cofactor.

Its subcellular location is the cytoplasm. The enzyme catalyses (R)-pantothenate + ATP = (R)-4'-phosphopantothenate + ADP + H(+). It participates in cofactor biosynthesis; coenzyme A biosynthesis; CoA from (R)-pantothenate: step 1/5. Catalyzes the phosphorylation of pantothenate (Pan), the first step in CoA biosynthesis. This is Type III pantothenate kinase from Clostridium perfringens (strain 13 / Type A).